Here is a 393-residue protein sequence, read N- to C-terminus: NAD(P)H-quinone oxidoreductase subunit H, chloroplastic (393 aa).

It belongs to the complex I 49 kDa subunit family. In terms of assembly, NDH is composed of at least 16 different subunits, 5 of which are encoded in the nucleus.

It localises to the plastid. The protein localises to the chloroplast thylakoid membrane. It carries out the reaction a plastoquinone + NADH + (n+1) H(+)(in) = a plastoquinol + NAD(+) + n H(+)(out). The enzyme catalyses a plastoquinone + NADPH + (n+1) H(+)(in) = a plastoquinol + NADP(+) + n H(+)(out). In terms of biological role, NDH shuttles electrons from NAD(P)H:plastoquinone, via FMN and iron-sulfur (Fe-S) centers, to quinones in the photosynthetic chain and possibly in a chloroplast respiratory chain. The immediate electron acceptor for the enzyme in this species is believed to be plastoquinone. Couples the redox reaction to proton translocation, and thus conserves the redox energy in a proton gradient. The sequence is that of NAD(P)H-quinone oxidoreductase subunit H, chloroplastic from Cucumis sativus (Cucumber).